The sequence spans 204 residues: Proteasome subunit beta type-2-A (204 aa).

Residue Met-1 is modified to N-acetylmethionine.

This sequence belongs to the peptidase T1B family. Component of the 20S core complex of the 26S proteasome. The 26S proteasome is composed of a core protease (CP), known as the 20S proteasome, capped at one or both ends by the 19S regulatory particle (RP/PA700). The 20S proteasome core is composed of 28 subunits that are arranged in four stacked rings, resulting in a barrel-shaped structure. The two end rings are each formed by seven alpha subunits, and the two central rings are each formed by seven beta subunits. The catalytic chamber with the active sites is on the inside of the barrel.

It localises to the cytoplasm. The protein resides in the nucleus. Non-catalytic component of the proteasome, a multicatalytic proteinase complex which is characterized by its ability to cleave peptides with Arg, Phe, Tyr, Leu, and Glu adjacent to the leaving group at neutral or slightly basic pH. The proteasome has an ATP-dependent proteolytic activity. This is Proteasome subunit beta type-2-A (PBD1) from Arabidopsis thaliana (Mouse-ear cress).